Reading from the N-terminus, the 104-residue chain is Large ribosomal subunit protein uL24 (104 aa).

It belongs to the universal ribosomal protein uL24 family. Part of the 50S ribosomal subunit.

One of two assembly initiator proteins, it binds directly to the 5'-end of the 23S rRNA, where it nucleates assembly of the 50S subunit. Its function is as follows. One of the proteins that surrounds the polypeptide exit tunnel on the outside of the subunit. The sequence is that of Large ribosomal subunit protein uL24 from Shewanella denitrificans (strain OS217 / ATCC BAA-1090 / DSM 15013).